Reading from the N-terminus, the 388-residue chain is 5-hydroxytryptamine receptor 4 (388 aa).

At M1 to K19 the chain is on the extracellular side. An N-linked (GlcNAc...) asparagine glycan is attached at N7. Residues V20 to V44 traverse the membrane as a helical segment. Over C45–K54 the chain is Cytoplasmic. The chain crosses the membrane as a helical span at residues T55 to A78. At I79–F92 the chain is on the extracellular side. Residues C93 to D117 form a helical membrane-spanning segment. The cysteines at positions 93 and 184 are disulfide-linked. Residue D100 participates in serotonin binding. The Cytoplasmic segment spans residues R118–M133. A helical transmembrane segment spans residues T134–I157. The Extracellular portion of the chain corresponds to M158–V188. Residues N189–Y212 traverse the membrane as a helical segment. At Y213 to A257 the chain is on the cytoplasmic side. The helical transmembrane segment at A258–P283 threads the bilayer. N279 contributes to the serotonin binding site. Residues F284 to P290 lie on the Extracellular side of the membrane. A helical transmembrane segment spans residues G291–F314. The Cytoplasmic portion of the chain corresponds to L315–T388.

This sequence belongs to the G-protein coupled receptor 1 family. Interacts (via C-terminus 330-346 AA) with GRK5; this interaction is promoted by 5-HT (serotonin). In terms of assembly, interacts with MAGI2, MPP3, NHERF1 and SNX27 isoforms 1 and 2. Forms a complex including NHERF1 and EZR. As to quaternary structure, interacts with PATJ, NOS1 and SEC23A. As to expression, expressed in ileum, brain, and atrium, but not in the ventricle. Mainly expressed in atria and cardiac ventricle. In terms of tissue distribution, expressed in all cardiovascular tissues analyzed.

It is found in the cell membrane. The protein resides in the endosome membrane. Functionally, G-protein coupled receptor for 5-hydroxytryptamine (serotonin), a biogenic hormone that functions as a neurotransmitter, a hormone and a mitogen. Ligand binding causes a conformation change that triggers signaling via guanine nucleotide-binding proteins (G proteins) and modulates the activity of downstream effectors. HTR4 is coupled to G(s) G alpha proteins and mediates activation of adenylate cyclase activity. The sequence is that of 5-hydroxytryptamine receptor 4 from Homo sapiens (Human).